The chain runs to 117 residues: MIGPSRGLRIMVATQPVDFRRGMNGLVALVGSALLADPYCGDIFVFRAKRCDRLRCIYWDGSGMILSTKWLESGKFIFPPVKDGALHMSPEEFSLLVAGLDWTRVKRKPVKRPTKVA.

Belongs to the transposase 34 family.

This is an uncharacterized protein from Sinorhizobium fredii (strain NBRC 101917 / NGR234).